The chain runs to 323 residues: MNSKCHCVILNDGNFIPVLGFGTALPLECPKSKAKELTKIAIDAGFHHFDSASVYNTEDHVGEAIRSKIADGTVRREDIFYTSKVWCTSLHPELVRASLERSLQKLQFDYVDLYLIHYPMALKPGEENFPVDEHGKLIFDRVDLCATWEAMEKCKDAGLTKSIGVSNFNYRQLEMILNKPGLKYKPVCNQVECHPYLNQMKLLDFCKSKDIVLVAYGVLGTQRYGGWVDQNSPVLLDEPVLGSMAKKYNRTPALIALRYQLQRGIVVLNTSLKEERIKENMQVFEFQLSSEDMKVLDGLNRNMRYIPAAIFKGHPNWPFLDEY.

20–24 (GFGTA) contributes to the NADP(+) binding site. Lys-31 contacts substrate. Asp-50 provides a ligand contact to NADP(+). The active-site Proton donor is Tyr-55. Substrate is bound at residue His-117. Residues 166–167 (SN), Gln-190, 216–224 (YGVLGTQRY), and 270–280 (TSLKEERIKEN) each bind NADP(+).

The protein belongs to the aldo/keto reductase family. In terms of assembly, monomer. Detected in kidney and brain.

Its subcellular location is the cytoplasm. The catalysed reaction is androsterone + NADP(+) = 5alpha-androstan-3,17-dione + NADPH + H(+). It catalyses the reaction androsterone + NAD(+) = 5alpha-androstan-3,17-dione + NADH + H(+). Inhibited by high concentrations of substrate. Its function is as follows. NADP-dependent 17-alpha-hydroxysteroid dehydrogenase that converts 5-alpha-androstane-3,17-dione into androsterone. Has lower 3-alpha-hydroxysteroid dehydrogenase activity. Has broad substrate specificity and acts on various 17-alpha-hydroxysteroids, 17-ketosteroids, 3-alpha hydroxysteroids and 3-ketosteroids. Reduction of keto groups is strictly stereoselective. Reduction of 17-ketosteroids yields only 17-alpha-hydroxysteroids. Likewise, reduction of 3-ketosteroids yields only 3-alpha-hydroxysteroids. The chain is Aldo-keto reductase family 1 member C21 (Akr1c21) from Mus musculus (Mouse).